Consider the following 209-residue polypeptide: ATP-dependent Clp protease proteolytic subunit 2 (209 aa).

Ser106 serves as the catalytic Nucleophile. His131 is an active-site residue.

The protein belongs to the peptidase S14 family. As to quaternary structure, fourteen ClpP subunits assemble into 2 heptameric rings which stack back to back to give a disk-like structure with a central cavity, resembling the structure of eukaryotic proteasomes.

Its subcellular location is the cytoplasm. The catalysed reaction is Hydrolysis of proteins to small peptides in the presence of ATP and magnesium. alpha-casein is the usual test substrate. In the absence of ATP, only oligopeptides shorter than five residues are hydrolyzed (such as succinyl-Leu-Tyr-|-NHMec, and Leu-Tyr-Leu-|-Tyr-Trp, in which cleavage of the -Tyr-|-Leu- and -Tyr-|-Trp bonds also occurs).. Cleaves peptides in various proteins in a process that requires ATP hydrolysis. Has a chymotrypsin-like activity. Plays a major role in the degradation of misfolded proteins. The chain is ATP-dependent Clp protease proteolytic subunit 2 from Rhizobium etli (strain ATCC 51251 / DSM 11541 / JCM 21823 / NBRC 15573 / CFN 42).